The chain runs to 94 residues: Co-chaperonin GroES (94 aa).

It belongs to the GroES chaperonin family. As to quaternary structure, heptamer of 7 subunits arranged in a ring. Interacts with the chaperonin GroEL.

It is found in the cytoplasm. In terms of biological role, together with the chaperonin GroEL, plays an essential role in assisting protein folding. The GroEL-GroES system forms a nano-cage that allows encapsulation of the non-native substrate proteins and provides a physical environment optimized to promote and accelerate protein folding. GroES binds to the apical surface of the GroEL ring, thereby capping the opening of the GroEL channel. The chain is Co-chaperonin GroES from Staphylococcus aureus (strain Mu50 / ATCC 700699).